A 443-amino-acid chain; its full sequence is Methyl-coenzyme M reductase II subunit beta (443 aa).

Residue tyrosine 367 participates in coenzyme M binding. Glycine 369 serves as a coordination point for coenzyme B.

It belongs to the methyl-coenzyme M reductase beta subunit family. In terms of assembly, MCR is a hexamer of two alpha, two beta, and two gamma chains, forming a dimer of heterotrimers. Coenzyme F430 is required as a cofactor.

The catalysed reaction is coenzyme B + methyl-coenzyme M = methane + coenzyme M-coenzyme B heterodisulfide. The protein operates within one-carbon metabolism; methyl-coenzyme M reduction; methane from methyl-coenzyme M: step 1/1. Its function is as follows. Component of the methyl-coenzyme M reductase (MCR) I that catalyzes the reductive cleavage of methyl-coenzyme M (CoM-S-CH3 or 2-(methylthio)ethanesulfonate) using coenzyme B (CoB or 7-mercaptoheptanoylthreonine phosphate) as reductant which results in the production of methane and the mixed heterodisulfide of CoB and CoM (CoM-S-S-CoB). This is the final step in methanogenesis. In Methanothermus fervidus (strain ATCC 43054 / DSM 2088 / JCM 10308 / V24 S), this protein is Methyl-coenzyme M reductase II subunit beta (mrtB).